A 299-amino-acid chain; its full sequence is MATLLSTERPRTGWRDYMELTKPKVVVLMLITSLVGMFLATRAGVAWSVLLFGNLGIGLCAGGAAVVNHVVDRRIDALMARTHKRPLAQGRVAPLPALAFALLLAVMGLALLLAFTNTLTAWLTLASLLGYAVLYTGFLKRATPQNIVIGGLAGAAPPLLGWVAVSGHVSAEPLLLVLIIFAWTPPHFWALAIHRKAEYEKADIPMLPVTHGEHYTALHILLYTLILLAVSLLPYAIHMSGPLYLACALALGLRFLHWAWVLYRGTRPHAAIKTFKYSIGYLFALFIALLVDHYLLLNL.

9 consecutive transmembrane segments (helical) span residues 25–45 (VVVLMLITSLVGMFLATRAGV), 47–67 (WSVLLFGNLGIGLCAGGAAVV), 95–115 (LPALAFALLLAVMGLALLLAF), 119–139 (LTAWLTLASLLGYAVLYTGFL), 147–167 (IVIGGLAGAAPPLLGWVAVSG), 173–193 (PLLLVLIIFAWTPPHFWALAI), 217–237 (ALHILLYTLILLAVSLLPYAI), 243–263 (LYLACALALGLRFLHWAWVLY), and 279–299 (IGYLFALFIALLVDHYLLLNL).

Belongs to the UbiA prenyltransferase family. Protoheme IX farnesyltransferase subfamily.

The protein localises to the cell inner membrane. The enzyme catalyses heme b + (2E,6E)-farnesyl diphosphate + H2O = Fe(II)-heme o + diphosphate. Its pathway is porphyrin-containing compound metabolism; heme O biosynthesis; heme O from protoheme: step 1/1. Its function is as follows. Converts heme B (protoheme IX) to heme O by substitution of the vinyl group on carbon 2 of heme B porphyrin ring with a hydroxyethyl farnesyl side group. In Pseudomonas entomophila (strain L48), this protein is Protoheme IX farnesyltransferase 1.